The chain runs to 826 residues: DEAD-box ATP-dependent RNA helicase 13 (826 aa).

Positions 1–10 (MVTGDKESSL) are enriched in basic and acidic residues. 2 disordered regions span residues 1-62 (MVTG…QLDG) and 76-175 (HLTL…GDDT). A compositionally biased stretch (basic residues) spans 11-22 (MKKRNKRSHKRK). A compositionally biased stretch (polar residues) spans 49–58 (SFSTLFSGSG). The segment covering 94–128 (EDDDDTNETVDEMIEGEEAEEDGEGRDDEDDEDDE) has biased composition (acidic residues). A coiled-coil region spans residues 125-166 (EDDEETRKKKEKKAKRNKEKKKEKKKKKQKKINEAAKNQDAS). Residues 133–154 (KKEKKAKRNKEKKKEKKKKKQK) show a composition bias toward basic residues. The Q motif motif lies at 190–218 (SAWSSMRLHPLLMKSIYRLDFKEPTKIQK). Residues 222–439 (NVAAYQGKDV…KLKRGSSKSK (218 aa)) form the Helicase ATP-binding domain. 235-242 (AETGSGKT) is a binding site for ATP. The DEAD box signature appears at 363-366 (DEAD). Positions 476-644 (KIEESFIKCE…YMPAVRKRLY (169 aa)) constitute a Helicase C-terminal domain. Coiled-coil stretches lie at residues 666-712 (LKKH…TLLS) and 783-810 (KMKGQSAEKRRDIASLKKKRKEEKIGRR). The tract at residues 783–826 (KMKGQSAEKRRDIASLKKKRKEEKIGRRDQRRNQKKQRKLMASS) is disordered. 2 stretches are compositionally biased toward basic and acidic residues: residues 788-797 (SAEKRRDIAS) and 804-814 (EEKIGRRDQRR). Residues 815-826 (NQKKQRKLMASS) show a composition bias toward basic residues.

The protein belongs to the DEAD box helicase family. DDX24/MAK5 subfamily.

It catalyses the reaction ATP + H2O = ADP + phosphate + H(+). The polypeptide is DEAD-box ATP-dependent RNA helicase 13 (RH13) (Arabidopsis thaliana (Mouse-ear cress)).